The primary structure comprises 101 residues: uncharacterized protein (101 aa).

This is an uncharacterized protein from Shigella flexneri.